Consider the following 180-residue polypeptide: MANRLKEKYTNEVVPALTEKFNYSSVMAVPKVEKIVLNMGVGDAVSNAKNLEKAAAELALISGQKPLITKAKKSIAGFRLREGVAIGAKVTLRGERMYEFLDKLVSVSLPRVRDFHGVPTKSFDGRGNYTLGVKEQLIFPEINFDDVDKVRGLDIVIVTTANTDEESRELLKGLGMPFAK.

The protein belongs to the universal ribosomal protein uL5 family. As to quaternary structure, part of the 50S ribosomal subunit; part of the 5S rRNA/L5/L18/L25 subcomplex. Contacts the 5S rRNA and the P site tRNA. Forms a bridge to the 30S subunit in the 70S ribosome.

Its function is as follows. This is one of the proteins that bind and probably mediate the attachment of the 5S RNA into the large ribosomal subunit, where it forms part of the central protuberance. In the 70S ribosome it contacts protein S13 of the 30S subunit (bridge B1b), connecting the 2 subunits; this bridge is implicated in subunit movement. Contacts the P site tRNA; the 5S rRNA and some of its associated proteins might help stabilize positioning of ribosome-bound tRNAs. This chain is Large ribosomal subunit protein uL5, found in Streptococcus agalactiae serotype Ia (strain ATCC 27591 / A909 / CDC SS700).